Here is a 137-residue protein sequence, read N- to C-terminus: Large ribosomal subunit protein uL16 (137 aa).

It belongs to the universal ribosomal protein uL16 family. In terms of assembly, part of the 50S ribosomal subunit.

Functionally, binds 23S rRNA and is also seen to make contacts with the A and possibly P site tRNAs. The protein is Large ribosomal subunit protein uL16 of Psychrobacter arcticus (strain DSM 17307 / VKM B-2377 / 273-4).